A 441-amino-acid chain; its full sequence is MAGUK p55 subfamily member 4 (441 aa).

Positions 1 to 84 constitute a PDZ domain; the sequence is MRTVCLVKNQ…TIMFKVIPVS (84 aa). One can recognise an SH3 domain in the interval 91–161; sequence QTTVYVRAMI…PSNHLLKRKQ (71 aa). Positions 232–421 constitute a Guanylate kinase-like domain; the sequence is HRLIVLVGPS…ARAQLLSAIQ (190 aa). Residues 373-430 adopt a coiled-coil conformation; it reads VDMKFKDEDLQEMEELAQKMESQFGQFFDHVIVNDNLQDARAQLLSAIQKAEEELQWV.

Belongs to the MAGUK family. Interacts with MPDZ. May interact with GRIA2. Forms a complex with CRB1 and PALS1. Interacts with FASLG. As to expression, highly expressed in brain and detected in lung, and bone (at protein level). Also expressed in intestine and spleen.

Its subcellular location is the cytoplasm. In terms of biological role, may play a role in retinal photoreceptors development. The sequence is that of MAGUK p55 subfamily member 4 (Mpp4) from Rattus norvegicus (Rat).